The following is a 2890-amino-acid chain: Bifunctional DNA-directed RNA polymerase subunit beta-beta' (2890 aa).

The DNA-directed RNA polymerase subunit beta stretch occupies residues 1-1377; sequence MSKKIPLKNR…DINIFGDDVD (1377 aa). The tract at residues 1384 to 2890 is DNA-directed RNA polymerase subunit beta'; the sequence is PIVIKEDDRP…LRTLEDDPKF (1507 aa). Cys-1449, Cys-1451, Cys-1465, and Cys-1468 together coordinate Zn(2+). Asp-1849, Asp-1851, and Asp-1853 together coordinate Mg(2+). 4 residues coordinate Zn(2+): Cys-2179, Cys-2253, Cys-2260, and Cys-2263.

In the N-terminal section; belongs to the RNA polymerase beta chain family. The protein in the C-terminal section; belongs to the RNA polymerase beta' chain family. As to quaternary structure, the RNAP catalytic core consists of 2 alpha, 1 beta/beta' and 1 omega subunit. When a sigma factor is associated with the core the holoenzyme is formed, which can initiate transcription. Requires Mg(2+) as cofactor. It depends on Zn(2+) as a cofactor.

It catalyses the reaction RNA(n) + a ribonucleoside 5'-triphosphate = RNA(n+1) + diphosphate. Functionally, DNA-dependent RNA polymerase catalyzes the transcription of DNA into RNA using the four ribonucleoside triphosphates as substrates. This chain is Bifunctional DNA-directed RNA polymerase subunit beta-beta' (rpoBC), found in Helicobacter pylori (strain Shi470).